The chain runs to 450 residues: Phosphoglucosamine mutase (450 aa).

Serine 97 acts as the Phosphoserine intermediate in catalysis. Positions 97, 236, 238, and 240 each coordinate Mg(2+). Serine 97 carries the post-translational modification Phosphoserine.

Belongs to the phosphohexose mutase family. The cofactor is Mg(2+). Post-translationally, activated by phosphorylation.

The catalysed reaction is alpha-D-glucosamine 1-phosphate = D-glucosamine 6-phosphate. In terms of biological role, catalyzes the conversion of glucosamine-6-phosphate to glucosamine-1-phosphate. The polypeptide is Phosphoglucosamine mutase (Prochlorococcus marinus (strain MIT 9312)).